Reading from the N-terminus, the 183-residue chain is Oligoribonuclease (183 aa).

The Exonuclease domain maps to 9-172; it reads LIWIDLEMTG…DDIRDSISEL (164 aa). Residue tyrosine 130 is part of the active site.

The protein belongs to the oligoribonuclease family.

It localises to the cytoplasm. In terms of biological role, 3'-to-5' exoribonuclease specific for small oligoribonucleotides. In Acinetobacter baylyi (strain ATCC 33305 / BD413 / ADP1), this protein is Oligoribonuclease.